Here is a 474-residue protein sequence, read N- to C-terminus: MKKQLNKITPRNIDFSQWYTDIVLNTKLASYGPVKGTMIFRPYGYRIWELIQKYLDEEFKKVNVDNVYFPLLIPESLFNKEKDHIDGFSPEIATVTRVGQKQLEENLFIRPTSEVLMMDYFSNEINSYRDLPLIYNQWCNVMRWEKTTRPFLRTSEFLWQEGHTVHSSYNEAENFCLKILNIYEKFAKEILLLPVICGKKTEKEKFAGAKDTYTIESLMFDGQALQCGTSHFFADNFTKVYDIKFQNKENKLEHAYSTSWGVSTRLIGALIMTHSDDNGLVLPSKISPIQVQIIQIKNTEQIDQVVEIIKDKLSDYRIDVDNSDKSFGFKISEAEIKGIPIRIEIGPRDLENNQITISRRDQQENKIKVDYKDIKSVVDQMIKDYDLALYNNALENRKNRTFKANTIEEYIEILKQNQGFVLVPFCGRVECEQDIKTKTLTNSRCIPFDQKEVKAKCFNCKKDTCLQVIFARAY.

The protein belongs to the class-II aminoacyl-tRNA synthetase family. ProS type 3 subfamily. As to quaternary structure, homodimer.

Its subcellular location is the cytoplasm. The enzyme catalyses tRNA(Pro) + L-proline + ATP = L-prolyl-tRNA(Pro) + AMP + diphosphate. Functionally, catalyzes the attachment of proline to tRNA(Pro) in a two-step reaction: proline is first activated by ATP to form Pro-AMP and then transferred to the acceptor end of tRNA(Pro). This chain is Proline--tRNA ligase, found in Mycoplasma capricolum subsp. capricolum (strain California kid / ATCC 27343 / NCTC 10154).